The sequence spans 113 residues: Large ribosomal subunit protein bL17 (113 aa).

The protein belongs to the bacterial ribosomal protein bL17 family. In terms of assembly, part of the 50S ribosomal subunit. Contacts protein L32.

This chain is Large ribosomal subunit protein bL17, found in Clostridium tetani (strain Massachusetts / E88).